A 687-amino-acid polypeptide reads, in one-letter code: Polyphosphate kinase (687 aa).

Asn-45 contributes to the ATP binding site. Residues Arg-375 and Arg-405 each coordinate Mg(2+). The active-site Phosphohistidine intermediate is His-435. Residues Tyr-472, Arg-568, and His-596 each contribute to the ATP site.

The protein belongs to the polyphosphate kinase 1 (PPK1) family. Mg(2+) serves as cofactor. In terms of processing, an intermediate of this reaction is the autophosphorylated ppk in which a phosphate is covalently linked to a histidine residue through a N-P bond.

The enzyme catalyses [phosphate](n) + ATP = [phosphate](n+1) + ADP. Functionally, catalyzes the reversible transfer of the terminal phosphate of ATP to form a long-chain polyphosphate (polyP). This Burkholderia ambifaria (strain ATCC BAA-244 / DSM 16087 / CCUG 44356 / LMG 19182 / AMMD) (Burkholderia cepacia (strain AMMD)) protein is Polyphosphate kinase.